A 310-amino-acid polypeptide reads, in one-letter code: Olfactory receptor 5P80 (310 aa).

Residues 1–25 (MEPGNYTVVTEVILLGFTEDAIIRA) lie on the Extracellular side of the membrane. An N-linked (GlcNAc...) asparagine glycan is attached at asparagine 5. Residues 26 to 46 (ILFIVFLIIYSVTLMGNASII) traverse the membrane as a helical segment. Over 47–54 (MLIRRSPQ) the chain is Cytoplasmic. Residues 55–75 (LHTPMYLLLSHLAFVDIGYSS) traverse the membrane as a helical segment. The Extracellular portion of the chain corresponds to 76 to 99 (SVTPIMLKGFLRKETFILVSGCVA). Cysteine 97 and cysteine 189 are disulfide-bonded. The chain crosses the membrane as a helical span at residues 100-120 (QLCSVVTFGSTECFLLAAMAY). Residues 121-133 (DRYVAICSPLLYA) are Cytoplasmic-facing. Residues 134 to 154 (TQMSSTVCILLVGASYLGGCV) form a helical membrane-spanning segment. The Extracellular portion of the chain corresponds to 155–196 (NAWTFTGCLLNLSFCRPNKVNHFFCDYSPLLKISCSHDFSSE). A glycan (N-linked (GlcNAc...) asparagine) is linked at asparagine 165. The chain crosses the membrane as a helical span at residues 197 to 217 (VIPAISSGSIIVVTVFIIALS). The Cytoplasmic portion of the chain corresponds to 218 to 237 (YVYILVSILKMRSTEGRQKA). Residues 238-258 (FSTCTSHLTAVTLFYGTITFI) traverse the membrane as a helical segment. At 259 to 271 (YVMPKSSYSTDQN) the chain is on the extracellular side. A helical membrane pass occupies residues 272–292 (KVVSVFYTVVIPMLNPIIYSL). The Cytoplasmic segment spans residues 293–310 (RNKDVKEAMKKLMANTHH).

It belongs to the G-protein coupled receptor 1 family.

It localises to the cell membrane. Functionally, potential odorant receptor. This chain is Olfactory receptor 5P80, found in Mus musculus (Mouse).